The sequence spans 255 residues: Homeobox protein DLX-1 (255 aa).

The segment covering 1–14 (MTMTTMPESLNSPV) has biased composition (polar residues). Disordered regions lie at residues 1–38 (MTMTTMPESLNSPVSGKAVFMEFGPPNQQMSPSPMSHG) and 95–118 (SLAQSRLEDPGADSEKSTVVEGGE). Positions 25-36 (PPNQQMSPSPMS) are enriched in low complexity. Positions 100 to 112 (RLEDPGADSEKST) are enriched in basic and acidic residues. Residues 128-187 (IRKPRTIYSSLQLQALNRRFQQTQYLALPERAELAASLGLTQTQVKIWFQNKRSKFKKLM) constitute a DNA-binding region (homeobox). The tract at residues 204-233 (ALSAGSPPVPPGWNPNSSSGKGSGSSAGSY) is disordered. The segment covering 217 to 232 (NPNSSSGKGSGSSAGS) has biased composition (low complexity).

Belongs to the distal-less homeobox family. In terms of assembly, interacts with SMAD4 (via homeobox DNA-binding domain). Interacts (via homeobox DNA-binding domain) with POU4F2; this interaction suppresses DLX1-mediated transcriptional activity in postnatal retina and enhances retinal ganglion cell (RGC) differentiation. Expressed in a restricted region of the developing brain, within the diencephalon and the adjacent telencephalic regions.

The protein resides in the nucleus. Its function is as follows. Plays a role as a transcriptional activator or repressor. Inhibits several cytokine signaling pathways, such as TGFB1, activin-A/INHBA and BMP4 by interfering with the transcriptional stimulatory activity of transcription factors, such as MSX2, FAST2, SMAD2 and SMAD3 during hematopoietic cell differentiation. Plays a role in terminal differentiation of interneurons, such as amacrine and bipolar cells in the developing retina. Likely to play a regulatory role in the development of the ventral forebrain. May play a role in craniofacial patterning and morphogenesis and may be involved in the early development of diencephalic subdivisions. This is Homeobox protein DLX-1 (Dlx1) from Mus musculus (Mouse).